We begin with the raw amino-acid sequence, 191 residues long: Threonylcarbamoyl-AMP synthase (191 aa).

In terms of domain architecture, YrdC-like spans 10-191; that stretch reads PFRVRHAAAE…DGRSGAYLRR (182 aa).

This sequence belongs to the SUA5 family. TsaC subfamily.

The protein resides in the cytoplasm. It carries out the reaction L-threonine + hydrogencarbonate + ATP = L-threonylcarbamoyladenylate + diphosphate + H2O. Its function is as follows. Required for the formation of a threonylcarbamoyl group on adenosine at position 37 (t(6)A37) in tRNAs that read codons beginning with adenine. Catalyzes the conversion of L-threonine, HCO(3)(-)/CO(2) and ATP to give threonylcarbamoyl-AMP (TC-AMP) as the acyladenylate intermediate, with the release of diphosphate. This chain is Threonylcarbamoyl-AMP synthase, found in Halorhodospira halophila (strain DSM 244 / SL1) (Ectothiorhodospira halophila (strain DSM 244 / SL1)).